A 669-amino-acid polypeptide reads, in one-letter code: UvrABC system protein C (669 aa).

One can recognise a GIY-YIG domain in the interval 14–91 (DSPGCYLHKD…IQRYKPKYNI (78 aa)). The region spanning 196–231 (KKIVKELEGKMISASDNMEFEQAAEYRDVIKAIGTL) is the UVR domain. Residues 647–669 (PHKSDENWESIKDNVPLLKSEKS) form a disordered region. Over residues 648–658 (HKSDENWESIK) the composition is skewed to basic and acidic residues.

This sequence belongs to the UvrC family. As to quaternary structure, interacts with UvrB in an incision complex.

Its subcellular location is the cytoplasm. Its function is as follows. The UvrABC repair system catalyzes the recognition and processing of DNA lesions. UvrC both incises the 5' and 3' sides of the lesion. The N-terminal half is responsible for the 3' incision and the C-terminal half is responsible for the 5' incision. This Lactococcus lactis subsp. cremoris (strain MG1363) protein is UvrABC system protein C.